The primary structure comprises 349 residues: MEAHNASAPFNFTLPPNFGKRPTDLALSVILVFMLFFIMLSLGCTMEFSKIKAHLWKPKGLAIALVAQYGIMPLTAFVLGKVFRLKNIEALAILVCGCSPGGNLSNVFSLAMKGDMNLSIVMTTCSTFCALGMMPLLLYIYSRGIYDGDLKDKVPYKGIVISLVLVLIPCTIGIVLKSKRPQYMRYVIKGGMIIILLCSVAVTVLSAINVGKSIMFAMTPLLIATSSLMPFIGFLLGYVLSALFCLNGRCRRTVSMETGCQNVQLCSTILNVAFPPEVIGPLFFFPLLYMIFQLGEGLLLIAIFWCYEKFKTPKDKTKMIYTAATTEETIPGALGNGTYKGEDCSPCTA.

At 1-22 (MEAHNASAPFNFTLPPNFGKRP) the chain is on the extracellular side. Residues Asn-5 and Asn-11 are each glycosylated (N-linked (GlcNAc...) asparagine). The chain crosses the membrane as a helical span at residues 23–44 (TDLALSVILVFMLFFIMLSLGC). The Cytoplasmic segment spans residues 45-47 (TME). Residues 48–83 (FSKIKAHLWKPKGLAIALVAQYGIMPLTAFVLGKVF) traverse the membrane as a helical segment. Over 84 to 86 (RLK) the chain is Extracellular. The discontinuously helical transmembrane segment at 87–112 (NIEALAILVCGCSPGGNLSNVFSLAM) threads the bilayer. Residues 113-115 (KGD) lie on the Cytoplasmic side of the membrane. Residues 116–142 (MNLSIVMTTCSTFCALGMMPLLLYIYS) traverse the membrane as a helical segment. Residues 143-156 (RGIYDGDLKDKVPY) lie on the Extracellular side of the membrane. Residues 157–179 (KGIVISLVLVLIPCTIGIVLKSK) form a helical membrane-spanning segment. At 180–183 (RPQY) the chain is on the cytoplasmic side. The chain crosses the membrane as a helical span at residues 184 to 217 (MRYVIKGGMIIILLCSVAVTVLSAINVGKSIMFA). The Extracellular segment spans residues 218–219 (MT). A helical transmembrane segment spans residues 220–243 (PLLIATSSLMPFIGFLLGYVLSAL). Over 244 to 247 (FCLN) the chain is Cytoplasmic. Residues 248-273 (GRCRRTVSMETGCQNVQLCSTILNVA) form a discontinuously helical membrane-spanning segment. The Extracellular portion of the chain corresponds to 274–280 (FPPEVIG). A helical membrane pass occupies residues 281-311 (PLFFFPLLYMIFQLGEGLLLIAIFWCYEKFK). The Cytoplasmic segment spans residues 312–349 (TPKDKTKMIYTAATTEETIPGALGNGTYKGEDCSPCTA).

This sequence belongs to the bile acid:sodium symporter (BASS) (TC 2.A.28) family. (Microbial infection) Interacts with the myristoylated pre-S1 domain of hepatitis B virus large envelope protein; myristoylation is essential for this interaction. In terms of tissue distribution, expressed in liver. Expressed in placental trophoblasts.

Its subcellular location is the cell membrane. It carries out the reaction taurocholate(out) + 2 Na(+)(out) = taurocholate(in) + 2 Na(+)(in). It catalyses the reaction cholate(out) + 2 Na(+)(out) = cholate(in) + 2 Na(+)(in). The catalysed reaction is estrone 3-sulfate(out) + 2 Na(+)(out) = estrone 3-sulfate(in) + 2 Na(+)(in). The enzyme catalyses taurochenodeoxycholate(out) + 2 Na(+)(out) = taurochenodeoxycholate(in) + 2 Na(+)(in). It carries out the reaction tauroursodeoxycholate(out) + 2 Na(+)(out) = tauroursodeoxycholate(in) + 2 Na(+)(in). It catalyses the reaction glycocholate(out) + 2 Na(+)(out) = glycocholate(in) + 2 Na(+)(in). The catalysed reaction is tauronorcholate(out) + 2 Na(+)(out) = tauronorcholate(in) + 2 Na(+)(in). The enzyme catalyses taurodeoxycholate(out) + 2 Na(+)(out) = taurodeoxycholate(in) + 2 Na(+)(in). It carries out the reaction tauroallocholate(out) + 2 Na(+)(out) = tauroallocholate(in) + 2 Na(+)(in). It catalyses the reaction taurohyodeoxycholate(out) + 2 Na(+)(out) = taurohyodeoxycholate(in) + 2 Na(+)(in). The catalysed reaction is taurohyocholate(out) + 2 Na(+)(out) = taurohyocholate(in) + 2 Na(+)(in). The enzyme catalyses tauro-beta-muricholate(out) + 2 Na(+)(out) = tauro-beta-muricholate(in) + 2 Na(+)(in). The transport of bile acids is sodium-dependent. Functionally, as a major transporter of conjugated bile salts from plasma into the hepatocyte, it plays a key role in the enterohepatic circulation of bile salts necessary for the solubilization and absorption of dietary fat and fat-soluble vitamins. It is strictly dependent on the extracellular presence of sodium. It exhibits broad substrate specificity and transports various bile acids, such as taurocholate, cholate, as well as non-bile acid organic compounds, such as estrone sulfate. Works collaboratively with the ileal transporter (NTCP2), the organic solute transporter (OST), and the bile salt export pump (BSEP), to ensure efficacious biological recycling of bile acids during enterohepatic circulation. (Microbial infection) Acts as an entry receptor for hepatitis B virus (HBV). The recognition for human SLC10A1/NTCP is highly specific. This chain is Hepatic sodium/bile acid cotransporter (SLC10A1), found in Homo sapiens (Human).